A 347-amino-acid chain; its full sequence is NADH-ubiquinone oxidoreductase chain 2 (347 aa).

Helical transmembrane passes span 1 to 21 (MNPMIFIILLGTIMLGTSIVM), 25 to 45 (HWFLTWLGFEMNMMAVIPVLM), 60 to 80 (FLTQATASMILMLAIIINLMF), 96 to 116 (MLLTTALVMKLGLAPFHFWVP), 127 to 147 (GLILLTWQKIAPLSLLYQIYP), 149 to 169 (INTNLLLIMSLLSIMIGGWGG), 178 to 198 (IMAYSSIAHMGWMMAIMIYNP), 202 to 222 (LLNLFIYILMTSSMFMLLIFA), 239 to 259 (IITIMSLMVLLSLGGLPPLTG), 274 to 294 (NSVILPTLMAILALLNLFFYM), and 326 to 346 (MMPLITMSTLALPLTPLFILL).

It belongs to the complex I subunit 2 family. As to quaternary structure, core subunit of respiratory chain NADH dehydrogenase (Complex I) which is composed of 45 different subunits. Interacts with TMEM242.

It localises to the mitochondrion inner membrane. It carries out the reaction a ubiquinone + NADH + 5 H(+)(in) = a ubiquinol + NAD(+) + 4 H(+)(out). Its function is as follows. Core subunit of the mitochondrial membrane respiratory chain NADH dehydrogenase (Complex I) that is believed to belong to the minimal assembly required for catalysis. Complex I functions in the transfer of electrons from NADH to the respiratory chain. The immediate electron acceptor for the enzyme is believed to be ubiquinone. This Suncus etruscus (Etruscan shrew) protein is NADH-ubiquinone oxidoreductase chain 2.